The primary structure comprises 741 residues: MATKFPKFSQDLAQDPTTRRIWYAMAMGNDFESHDGMTEENLYQKIFATHFGHLAIIFLWASSLLFHVAWQGNFEQWIKDPLHVRPIAHAIWDPHFGKPAIEAFTQAGANGPVNIAYSGVYHWWYTIGMRTNTELYTGSVFLLLFASLFLFAGWLHLQPKFRPSLAWFKSAESRLNHHLAGLFGVSSLAWAGHLIHVAIPESRGQHVGWDNFLSTAPHPAGLQPFFTGNWGVYAQNPDTAGHIFSTSQGAGTAILTFLGGFHPQTESLWLTDMAHHHLAIAVLFIVAGHMYRTNFGIGHSIKEMMNAKTFFGKPVEGPFNMPHQGIYDTYNNSLHFQLGWHLACLGVVTSWVAQHMYSLPSYAFIAKDYTTQAALYTHHQYIAIFLMVGAFAHGAIFLVRDYDPEQNKGNVLERVLQHKEAIISHLSWVSLFLGFHTLGLYVHNDVVVAFGTPEKQILIEPVFAQFIQAAHGKVLYGLDTLLSNPDSVAYTAYPNYANVWLPGWLDAINSGTNSLFLTIGPGDFLVHHAIALGLHTTTLILVKGALDARGSKLMPDKKDFGYAFPCDGPGRGGTCDISAWDSFYLSLFWALNTVGWVTFYWHWKHLGIWQGNVAQFNENSTYLMGWFRDYLWANSAQLINGYNPYGVNNLSVWAWMFLFGHLVWATGFMFLISWRGYWQELIETLVWAHERTPIANLVRWKDKPVALSIVQARVVGLAHFTVGYVLTYAAFLIASTAGKFG.

Helical transmembrane passes span 46-69, 135-158, 175-199, 273-291, 334-357, 373-399, 421-443, and 524-542; these read IFAT…FHVA, LYTG…LHLQ, LNHH…HVAI, MAHH…GHMY, LHFQ…QHMY, AALY…IFLV, AIIS…LYVH, and FLVH…LILV. The [4Fe-4S] cluster site is built by Cys566 and Cys575. 2 helical membrane-spanning segments follow: residues 582-603 and 650-672; these read SFYL…YWHW and LSVW…MFLI. 3 residues coordinate chlorophyll a: His661, Met669, and Tyr677. Position 678 (Trp678) interacts with phylloquinone. Residues 714 to 734 form a helical membrane-spanning segment; that stretch reads VVGLAHFTVGYVLTYAAFLIA.

It belongs to the PsaA/PsaB family. As to quaternary structure, the PsaA/B heterodimer binds the P700 chlorophyll special pair and subsequent electron acceptors. PSI consists of a core antenna complex that captures photons, and an electron transfer chain that converts photonic excitation into a charge separation. The cyanobacterial PSI reaction center is composed of one copy each of PsaA,B,C,D,E,F,I,J,K,L,M and X, and forms trimeric complexes. It depends on PSI electron transfer chain: 5 chlorophyll a, 1 chlorophyll a', 2 phylloquinones and 3 4Fe-4S clusters. PSI core antenna: 90 chlorophyll a, 22 carotenoids, 3 phospholipids and 1 galactolipid. P700 is a chlorophyll a/chlorophyll a' dimer, A0 is one or more chlorophyll a, A1 is one or both phylloquinones and FX is a shared 4Fe-4S iron-sulfur center. as a cofactor.

Its subcellular location is the cellular thylakoid membrane. It carries out the reaction reduced [plastocyanin] + hnu + oxidized [2Fe-2S]-[ferredoxin] = oxidized [plastocyanin] + reduced [2Fe-2S]-[ferredoxin]. PsaA and PsaB bind P700, the primary electron donor of photosystem I (PSI), as well as the electron acceptors A0, A1 and FX. PSI is a plastocyanin/cytochrome c6-ferredoxin oxidoreductase, converting photonic excitation into a charge separation, which transfers an electron from the donor P700 chlorophyll pair to the spectroscopically characterized acceptors A0, A1, FX, FA and FB in turn. Oxidized P700 is reduced on the lumenal side of the thylakoid membrane by plastocyanin or cytochrome c6. This Nostoc sp. (strain PCC 7120 / SAG 25.82 / UTEX 2576) protein is Photosystem I P700 chlorophyll a apoprotein A2 1 (psaB1).